A 423-amino-acid polypeptide reads, in one-letter code: Exodeoxyribonuclease 7 large subunit (423 aa).

Belongs to the XseA family. In terms of assembly, heterooligomer composed of large and small subunits.

It localises to the cytoplasm. It catalyses the reaction Exonucleolytic cleavage in either 5'- to 3'- or 3'- to 5'-direction to yield nucleoside 5'-phosphates.. Functionally, bidirectionally degrades single-stranded DNA into large acid-insoluble oligonucleotides, which are then degraded further into small acid-soluble oligonucleotides. The polypeptide is Exodeoxyribonuclease 7 large subunit (Natranaerobius thermophilus (strain ATCC BAA-1301 / DSM 18059 / JW/NM-WN-LF)).